A 462-amino-acid polypeptide reads, in one-letter code: Integrator complex subunit 12 (462 aa).

The interval 42 to 132 is disordered; sequence GIDSSYRPSQ…PETQSSPITV (91 aa). Positions 59–86 are enriched in polar residues; sequence ISSTKNISIKQEPKISSSLPSGNNNGKV. Residue lysine 68 forms a Glycyl lysine isopeptide (Lys-Gly) (interchain with G-Cter in SUMO2) linkage. The segment covering 88-124 has biased composition (basic and acidic residues); the sequence is TTEKVKKEAEKRPADKMKSDITEGVDIPKKPRLEKPE. The residue at position 128 (serine 128) is a Phosphoserine. The PHD-type zinc-finger motif lies at 159 to 215; that stretch reads GLACVVCRQMMVASGNQLVECQECHNLYHRDCHKPQVTDKEANDPRLVWYCARCTRQ. Residue lysine 254 forms a Glycyl lysine isopeptide (Lys-Gly) (interchain with G-Cter in SUMO2) linkage. Residues 301–328 are compositionally biased toward polar residues; that stretch reads SSAGPSTAKLSSTTQNNTGKPATSSANQ. The disordered stretch occupies residues 301–462; it reads SSAGPSTAKL…KKAAQKKLKK (162 aa). Low complexity-rich tracts occupy residues 347–358 and 382–437; these read KIGSNNSTTPTV and VSKV…GPTS. Residues 449–462 show a composition bias toward basic residues; that stretch reads QMVKKKAAQKKLKK.

This sequence belongs to the Integrator subunit 12 family. In terms of assembly, component of the Integrator complex, composed of core subunits INTS1, INTS2, INTS3, INTS4, INTS5, INTS6, INTS7, INTS8, INTS9/RC74, INTS10, INTS11/CPSF3L, INTS12, INTS13, INTS14 and INTS15. The core complex associates with protein phosphatase 2A subunits PPP2CA and PPP2R1A, to form the Integrator-PP2A (INTAC) complex. In terms of processing, dephosphorylated at Ser-128 by the PNUTS-PP1 complex, promoting RNA polymerase II transcription pause-release.

The protein localises to the nucleus. Component of the integrator complex, a multiprotein complex that terminates RNA polymerase II (Pol II) transcription in the promoter-proximal region of genes. The integrator complex provides a quality checkpoint during transcription elongation by driving premature transcription termination of transcripts that are unfavorably configured for transcriptional elongation: the complex terminates transcription by (1) catalyzing dephosphorylation of the C-terminal domain (CTD) of Pol II subunit POLR2A/RPB1 and SUPT5H/SPT5, (2) degrading the exiting nascent RNA transcript via endonuclease activity and (3) promoting the release of Pol II from bound DNA. The integrator complex is also involved in terminating the synthesis of non-coding Pol II transcripts, such as enhancer RNAs (eRNAs), small nuclear RNAs (snRNAs), telomerase RNAs and long non-coding RNAs (lncRNAs). Mediates recruitment of cytoplasmic dynein to the nuclear envelope, probably as component of the integrator complex. The protein is Integrator complex subunit 12 of Homo sapiens (Human).